Consider the following 116-residue polypeptide: Protein Rev (116 aa).

2 positions are modified to phosphoserine; by host CK2: S5 and S8. The interval 18–26 is homomultimerization; that stretch reads LIKVLYQSN. The interval 23–48 is disordered; that stretch reads YQSNPPPSSEGTRQARRNRRRRWRER. The Nuclear localization signal and RNA-binding (RRE) motif lies at 34-50; it reads TRQARRNRRRRWRERQR. Residues 36–47 are compositionally biased toward basic residues; the sequence is QARRNRRRRWRE. The short motif at 73 to 84 is the Nuclear export signal and binding to XPO1 element; that stretch reads FQLPPLERLTLD. The interval 90-116 is disordered; sequence GTSGTQGVGSPQILVESPPVLDSGTKE. A phosphoserine; by host mark is found at S92 and S99.

Belongs to the HIV-1 REV protein family. As to quaternary structure, homomultimer; when bound to the RRE. Multimeric assembly is essential for activity and may involve XPO1. Binds to human KPNB1, XPO1, TNPO1, RANBP5 and IPO7. Interacts with the viral Integrase. Interacts with human KHDRBS1. Interacts with human NAP1; this interaction decreases Rev multimerization and stimulates its activity. Interacts with human DEAD-box helicases DDX3 and DDX24; these interactions may serve for viral RNA export to the cytoplasm and packaging, respectively. Interacts with human PSIP1; this interaction may inhibit HIV-1 DNA integration by promoting dissociation of the Integrase-LEDGF/p75 complex. In terms of processing, asymmetrically arginine dimethylated at one site by host PRMT6. Methylation impairs the RNA-binding activity and export of viral RNA from the nucleus to the cytoplasm. Phosphorylated by protein kinase CK2. Presence of, and maybe binding to the N-terminus of the regulatory beta subunit of CK2 is necessary for CK2-mediated Rev's phosphorylation.

It localises to the host nucleus. The protein resides in the host nucleolus. Its subcellular location is the host cytoplasm. Functionally, escorts unspliced or incompletely spliced viral pre-mRNAs (late transcripts) out of the nucleus of infected cells. These pre-mRNAs carry a recognition sequence called Rev responsive element (RRE) located in the env gene, that is not present in fully spliced viral mRNAs (early transcripts). This function is essential since most viral proteins are translated from unspliced or partially spliced pre-mRNAs which cannot exit the nucleus by the pathway used by fully processed cellular mRNAs. Rev itself is translated from a fully spliced mRNA that readily exits the nucleus. Rev's nuclear localization signal (NLS) binds directly to KPNB1/Importin beta-1 without previous binding to KPNA1/Importin alpha-1. KPNB1 binds to the GDP bound form of RAN (Ran-GDP) and targets Rev to the nucleus. In the nucleus, the conversion from Ran-GDP to Ran-GTP dissociates Rev from KPNB1 and allows Rev's binding to the RRE in viral pre-mRNAs. Rev multimerization on the RRE via cooperative assembly exposes its nuclear export signal (NES) to the surface. Rev can then form a complex with XPO1/CRM1 and Ran-GTP, leading to nuclear export of the complex. Conversion from Ran-GTP to Ran-GDP mediates dissociation of the Rev/RRE/XPO1/RAN complex, so that Rev can return to the nucleus for a subsequent round of export. Beside KPNB1, also seems to interact with TNPO1/Transportin-1, RANBP5/IPO5 and IPO7/RANBP7 for nuclear import. The nucleoporin-like HRB/RIP is an essential cofactor that probably indirectly interacts with Rev to release HIV RNAs from the perinuclear region to the cytoplasm. The protein is Protein Rev of Human immunodeficiency virus type 1 group M subtype B (isolate YU-2) (HIV-1).